Consider the following 91-residue polypeptide: Large ribosomal subunit protein uL23c (91 aa).

This sequence belongs to the universal ribosomal protein uL23 family. In terms of assembly, part of the 50S ribosomal subunit.

The protein localises to the plastid. The protein resides in the chloroplast. In terms of biological role, binds to 23S rRNA. The polypeptide is Large ribosomal subunit protein uL23c (rpl23) (Anthoceros angustus (Hornwort)).